The following is a 434-amino-acid chain: ATP phosphoribosyltransferase regulatory subunit (434 aa).

Positions 1 to 48 (MYGRGSGAEHSRGSGAEHFWDPRPEASSTVSSSLRPPSGARDLLPREV) are disordered. Low complexity predominate over residues 27-38 (SSTVSSSLRPPS).

The protein belongs to the class-II aminoacyl-tRNA synthetase family. HisZ subfamily. Heteromultimer composed of HisG and HisZ subunits.

The protein resides in the cytoplasm. It participates in amino-acid biosynthesis; L-histidine biosynthesis; L-histidine from 5-phospho-alpha-D-ribose 1-diphosphate: step 1/9. Functionally, required for the first step of histidine biosynthesis. May allow the feedback regulation of ATP phosphoribosyltransferase activity by histidine. The sequence is that of ATP phosphoribosyltransferase regulatory subunit from Synechococcus sp. (strain JA-2-3B'a(2-13)) (Cyanobacteria bacterium Yellowstone B-Prime).